A 150-amino-acid polypeptide reads, in one-letter code: uncharacterized protein (150 aa).

Belongs to the Dps family.

This is an uncharacterized protein from Kitasatospora aureofaciens (Streptomyces aureofaciens).